Consider the following 329-residue polypeptide: Probable CTD kinase subunit alpha homolog (329 aa).

Residues tyrosine 22–phenylalanine 297 enclose the Protein kinase domain. Residues isoleucine 28 to valine 36 and lysine 49 each bind ATP. Catalysis depends on aspartate 139, which acts as the Proton acceptor.

It belongs to the protein kinase superfamily. CMGC Ser/Thr protein kinase family. CDC2/CDKX subfamily. In terms of assembly, component of the CTDK-I complex.

Its subcellular location is the nucleus. The protein resides in the nucleolus. It catalyses the reaction [DNA-directed RNA polymerase] + ATP = phospho-[DNA-directed RNA polymerase] + ADP + H(+). In terms of biological role, catalytic subunit of the CTDK-I complex, which hyperphosphorylates the C-terminal heptapeptide repeat domain (CTD) of the largest RNA polymerase II subunit. Involved in RNA polymerase II transcriptional elongation and pre-mRNA 3'-end processing. This is Probable CTD kinase subunit alpha homolog (CTK1) from Encephalitozoon cuniculi (strain GB-M1) (Microsporidian parasite).